The primary structure comprises 753 residues: A-kinase anchor protein 200 (753 aa).

Disordered stretches follow at residues 1 to 345, 462 to 482, 531 to 604, 620 to 641, and 658 to 684; these read MGKA…QIEA, VETRSSSPPPPLPKSPPPSRV, TEQE…IDPA, VEKETGSISSNVAESSSVSDEQ, and VEETTEQETSDQQVISEEAHSDNDKEN. A lipid anchor (N-myristoyl glycine) is attached at glycine 2. Basic and acidic residues-rich tracts occupy residues 8-38 and 59-77; these read RSIDITTDPKKVGEGDEVAGKVEKIDVDQKT and AVEKKETEEHSENDKDLTT. Over residues 81–93 the composition is skewed to low complexity; sequence AAVAEGGDAVAET. Residues 119–148 are F-actin binding; sequence KSKSKKDKVKKKWSFRSISFGKKDKQKPAK. The span at 120–132 shows a compositional bias: basic residues; the sequence is SKSKKDKVKKKWS. Phosphoserine occurs at positions 132, 135, and 137. The span at 139–151 shows a compositional bias: basic and acidic residues; that stretch reads GKKDKQKPAKSEE. Over residues 152-181 the composition is skewed to low complexity; it reads ATSPTSGTTSPTTAEAEAAPAGDAAVAEPS. Over residues 216–227 the composition is skewed to basic and acidic residues; it reads EQEKQANGETEK. Low complexity predominate over residues 246 to 262; it reads EPATVTATESNTTATEE. Residues 345–725 form an interaction with PKA-R2 region; sequence ASSEVIETVT…AEQEGESNNK (381 aa). Residues 468-480 are compositionally biased toward pro residues; sequence SPPPPLPKSPPPS. Basic and acidic residues predominate over residues 532–544; it reads EQEKQQEEAKVDS. Positions 545-561 are enriched in low complexity; sequence VPETIEESSSTVVVEEV. Residues 578–594 are compositionally biased toward basic and acidic residues; the sequence is DVQKPIEDQDTPDEKES. Over residues 626 to 638 the composition is skewed to low complexity; that stretch reads SISSNVAESSSVS. Over residues 674-684 the composition is skewed to basic and acidic residues; the sequence is EEAHSDNDKEN.

Homodimer. Interacts with Cam; interaction is calcium-dependent and is inhibited by PKC-mediated phosphorylation of Akap200. Interacts with N/Notch; the interaction stabilizes N/Notch protein levels by preventing Cbl-mediated ubiquitination and subsequent lysosomal degradation of N/Notch. Interacts with Pka-R2. Binds to F-actin; interaction is independent of myristoylation, but is inhibited by Akap200 phosphorylation and Cam binding. Isoform B: Does not bind to Pka-R2. Post-translationally, myristoylated; myristoylation promotes accumulation at the cell periphery. Phosphorylated; phosphorylation prevents binding to F-actin and Cam. In terms of tissue distribution, detected in the brain in both neurons and glia (including perineurial glia); specifically in the neuronal nuclei in the cortex and synaptic neuropil (at protein level). Detected in germline cells, somatic follicle cells and outer rim of the ring canals during oogenesis (at protein level). Isoform A: Detected in the adult (at protein level). Isoform B: Detected in the adult with higher levels in the head (at protein level).

The protein resides in the cytoplasm. It localises to the cytosol. The protein localises to the cell membrane. It is found in the cytoskeleton. Scaffolding protein involved in the regulation of PKA signaling and anchoring to the actin cytoskeleton integrating signals propagated by cAMP, diacylglycerol and calcium. Contributes to the maintenance and regulation of cytoskeletal structures in germline via PKA-mediated signaling. As part of ethanol response in the glia, mediates ethanol-induced structural remodeling of actin cytoskeleton and perineurial membrane topology by anchoring PKA to the membrane of perineurial glia. In specific tissues such as eye and thorax, promotes N/Notch protein stability by inhibiting Cbl-mediated ubiquitination and lysosomal degradation pathway of N/Notch in a PKA-independent way. In the circadian brain neurons evening cells (E-cells), might have a role in circadian pacemaker synchronization by playing a redundant role in signaling downstream of the G protein-couple receptor Pdfr. In Drosophila melanogaster (Fruit fly), this protein is A-kinase anchor protein 200.